The primary structure comprises 194 residues: Chitin synthase 2 (194 aa).

The protein belongs to the chitin synthase family. Class III subfamily.

The protein localises to the cell membrane. The enzyme catalyses [(1-&gt;4)-N-acetyl-beta-D-glucosaminyl](n) + UDP-N-acetyl-alpha-D-glucosamine = [(1-&gt;4)-N-acetyl-beta-D-glucosaminyl](n+1) + UDP + H(+). Its function is as follows. Polymerizes chitin, a structural polymer of the cell wall and septum, by transferring the sugar moiety of UDP-GlcNAc to the non-reducing end of the growing chitin polymer. This chain is Chitin synthase 2 (CHS2), found in Ajellomyces capsulatus (Darling's disease fungus).